A 121-amino-acid chain; its full sequence is Secretin (121 aa).

The first 18 residues, 1–18, serve as a signal peptide directing secretion; sequence MAPRPLLLLLLLLGGSAA. The propeptide occupies 19–26; it reads RPAPPRAR. V54 carries the post-translational modification Valine amide. The residue at position 58 (S58) is a Phosphoserine. The propeptide occupies 58-121; it reads SEQDAENSMA…AAAEGTLRPR (64 aa).

It belongs to the glucagon family.

The protein resides in the secreted. In terms of biological role, hormone involved in different processes, such as regulation of the pH of the duodenal content, food intake and water homeostasis. Exerts its biological effects by binding to secretin receptor (SCTR), a G-protein coupled receptor expressed in the basolateral domain of several cells. Acts as a key gastrointestinal hormone by regulating the pH of the duodenal content. Secreted by S cells of the duodenum in the crypts of Lieberkuehn and regulates the pH of the duodenum by (1) inhibiting the secretion of gastric acid from the parietal cells of the stomach and (2) stimulating the production of bicarbonate (NaHCO(3)) from the ductal cells of the pancreas. Production of bicarbonate is essential to neutralize the pH and ensure no damage is done to the small intestine by the gastric acid. In addition to regulating the pH of the duodenal content, plays a central role in diet induced thermogenesis: acts as a non-sympathetic brown fat (BAT) activator mediating prandial thermogenesis, which consequentially induces satiation. Mechanistically, secretin released by the gut after a meal binds to secretin receptor (SCTR) in brown adipocytes, activating brown fat thermogenesis by stimulating lipolysis, which is sensed in the brain and promotes satiation. Also able to stimulate lipolysis in white adipocytes. Also plays an important role in cellular osmoregulation: released into the systemic circulation in response to hyperosmolality and acts at different levels in the hypothalamus, pituitary and kidney to regulate water homeostasis. Also plays a role in the central nervous system, possibly by acting as a neuropeptide hormone: required for hippocampal synaptic function and neural progenitor cells maintenance. This chain is Secretin, found in Homo sapiens (Human).